A 352-amino-acid polypeptide reads, in one-letter code: Isoflavone-7-O-methyltransferase 8 (352 aa).

118 to 127 provides a ligand contact to substrate; sequence VLDPTLSGSY. S-adenosyl-L-methionine-binding residues include G196, D219, D239, M240, and K253. H257 (proton acceptor) is an active-site residue.

It belongs to the class I-like SAM-binding methyltransferase superfamily. Cation-independent O-methyltransferase family. COMT subfamily. In terms of assembly, homodimer.

It carries out the reaction a 7-hydroxyisoflavone + S-adenosyl-L-methionine = a 7-methoxyisoflavone + S-adenosyl-L-homocysteine + H(+). It participates in phytoalexin biosynthesis; medicarpin biosynthesis. Its function is as follows. Transfers a methyl group to 7-hydroxyls of the isoflavones daidzein, genistein and 6,7,4'-trihydroxyisoflavone. Can also methylate (+)6a-hydroxymaackiain with lower efficiency. The polypeptide is Isoflavone-7-O-methyltransferase 8 (Medicago sativa (Alfalfa)).